Reading from the N-terminus, the 673-residue chain is Thimet-like oligopeptidase (673 aa).

Zn(2+) is bound at residue His-465. The active site involves Glu-466. 2 residues coordinate Zn(2+): His-469 and His-472.

The protein belongs to the peptidase M3 family. Requires Zn(2+) as cofactor.

The chain is Thimet-like oligopeptidase from Dictyostelium discoideum (Social amoeba).